The primary structure comprises 708 residues: Leukotoxin translocation ATP-binding protein LktB (708 aa).

Positions 1–126 (MEANHQRNDL…ACYQGQLILV (126 aa)) constitute a Peptidase C39 domain. The 283-residue stretch at 155–437 (FLETLIVSIF…LAQLWQDFQQ (283 aa)) folds into the ABC transmembrane type-1 domain. Helical transmembrane passes span 159 to 179 (LIVSIFLQIFALITPLFFQVV), 192 to 212 (LNIITVALAIVIIFEIVLSGL), 270 to 290 (ALTSVLDLLFSFIFFAVMWYY), 296 to 316 (LVILGSLPCYILWSIFISPIL), and 389 to 409 (VMVINLWLGAHLVISGDLSIG). In terms of domain architecture, ABC transporter spans 469-704 (ISFKNIRFRY…SNGLYSYLHQ (236 aa)). Residue 503–510 (GRSGSGKS) participates in ATP binding.

Belongs to the ABC transporter superfamily. Protein-1 exporter (TC 3.A.1.109) family. In terms of assembly, homodimer.

The protein resides in the cell inner membrane. It catalyses the reaction ATP + H2O + proteinSide 1 = ADP + phosphate + proteinSide 2.. In terms of biological role, part of the ABC transporter complex LktBD involved in leukotoxin export. Transmembrane domains (TMD) form a pore in the inner membrane and the ATP-binding domain (NBD) is responsible for energy generation. The polypeptide is Leukotoxin translocation ATP-binding protein LktB (lktB) (Mannheimia haemolytica (Pasteurella haemolytica)).